Consider the following 301-residue polypeptide: Phospholipase A1 (301 aa).

An intrachain disulfide couples cysteine 4 to cysteine 87. The active-site Nucleophile is the serine 137. Aspartate 165 acts as the Charge relay system in catalysis. Disulfide bonds link cysteine 176–cysteine 181 and cysteine 219–cysteine 228. Catalysis depends on histidine 230, which acts as the Charge relay system. Intrachain disulfides connect cysteine 245/cysteine 269, cysteine 246/cysteine 294, and cysteine 262/cysteine 267.

Belongs to the AB hydrolase superfamily. Lipase family. In terms of tissue distribution, expressed by the venom gland.

It is found in the secreted. The enzyme catalyses a 1,2-diacyl-sn-glycero-3-phosphocholine + H2O = a 2-acyl-sn-glycero-3-phosphocholine + a fatty acid + H(+). Catalyzes the hydrolysis of phosphatidylcholine with phospholipase A1 activity. May act as an allergen and induce hemolytic activity. The chain is Phospholipase A1 from Vespa crabro (European hornet).